The following is a 228-amino-acid chain: Ribonuclease 3 (228 aa).

The 123-residue stretch at 8–130 (LKRLERRVDY…IIGAAFLDSD (123 aa)) folds into the RNase III domain. Glutamate 43 lines the Mg(2+) pocket. Aspartate 47 is an active-site residue. Positions 116 and 119 each coordinate Mg(2+). Glutamate 119 is a catalytic residue. Residues 157–226 (DPKTRLQEHL…ANKMLDSLSG (70 aa)) enclose the DRBM domain.

The protein belongs to the ribonuclease III family. In terms of assembly, homodimer. It depends on Mg(2+) as a cofactor.

The protein resides in the cytoplasm. It catalyses the reaction Endonucleolytic cleavage to 5'-phosphomonoester.. Digests double-stranded RNA. Involved in the processing of primary rRNA transcript to yield the immediate precursors to the large and small rRNAs (23S and 16S). Processes some mRNAs, and tRNAs when they are encoded in the rRNA operon. Processes pre-crRNA and tracrRNA of type II CRISPR loci if present in the organism. The chain is Ribonuclease 3 from Psychromonas ingrahamii (strain DSM 17664 / CCUG 51855 / 37).